A 156-amino-acid polypeptide reads, in one-letter code: Inorganic triphosphatase (156 aa).

A CYTH domain is found at 2-148 (GKEIEKKFIV…PRYLNSNLVK (147 aa)). The active-site Proton acceptor is the Y29.

In terms of assembly, homodimer.

It carries out the reaction triphosphate + H2O = phosphate + diphosphate. The catalysed reaction is ATP + H2O = ADP + phosphate + H(+). Involved in the hydrolysis of the beta-gamma-phosphoanhydride linkage of triphosphate-containing substrates (inorganic or nucleoside-linked). Catalyzes vigorously the hydrolysis of inorganic triphosphate (PPPi), however it can also catalyze the hydrolysis of ATP to ADP and phosphate. It can use ribonucleotides such as GTP, CTP, or UTP and deoxynucleotides such as dATP, dGTP, dCTP, and dTTP. The polypeptide is Inorganic triphosphatase (Acetivibrio thermocellus (strain ATCC 27405 / DSM 1237 / JCM 9322 / NBRC 103400 / NCIMB 10682 / NRRL B-4536 / VPI 7372) (Clostridium thermocellum)).